The chain runs to 449 residues: Trigger factor (449 aa).

Residues 162–247 (GDTVTIDYTG…IHEVKSKELP (86 aa)) form the PPIase FKBP-type domain. Positions 427–438 (AKKATKKSTAKK) are enriched in basic residues. The interval 427–449 (AKKATKKSTAKKSTKEDEKKADK) is disordered. A compositionally biased stretch (basic and acidic residues) spans 439 to 449 (STKEDEKKADK).

It belongs to the FKBP-type PPIase family. Tig subfamily.

The protein resides in the cytoplasm. The catalysed reaction is [protein]-peptidylproline (omega=180) = [protein]-peptidylproline (omega=0). Involved in protein export. Acts as a chaperone by maintaining the newly synthesized protein in an open conformation. Functions as a peptidyl-prolyl cis-trans isomerase. In Lactobacillus gasseri (strain ATCC 33323 / DSM 20243 / BCRC 14619 / CIP 102991 / JCM 1131 / KCTC 3163 / NCIMB 11718 / NCTC 13722 / AM63), this protein is Trigger factor.